The sequence spans 317 residues: MLNPQLNRHGELIHLLSTEGLPRRIIEQILDLAATFVPAPGQEFPKLPLLHGKSVFNLFFENSTRTRTTFEIAAKRLSADVVNLNIAASSTSKGESLLDTIANLSAMQADLFVVRHGASGAPYLIAQHVAPHVHVINAGDGRHAHPTQALLDMYTIRHHKGDFNQLTVAIVGDVLHSRVARSDIHALTTLGVPEVRVVAPATLLPEGLAQMGVRVCTDMEEGLRDADVVIMLRLQNERMRGALLPSAHEYFKHYGLTQARLALARPDAIVMHPGPMNRGVEIASEVADSGQAVILDQVTFGIAVRMAAMSLVAGVRP.

2 residues coordinate carbamoyl phosphate: R65 and T66. Position 93 (K93) interacts with L-aspartate. Positions 115, 145, and 148 each coordinate carbamoyl phosphate. L-aspartate contacts are provided by R178 and R233. Carbamoyl phosphate contacts are provided by G274 and P275.

It belongs to the aspartate/ornithine carbamoyltransferase superfamily. ATCase family. As to quaternary structure, heterododecamer (2C3:3R2) of six catalytic PyrB chains organized as two trimers (C3), and six regulatory PyrI chains organized as three dimers (R2).

It carries out the reaction carbamoyl phosphate + L-aspartate = N-carbamoyl-L-aspartate + phosphate + H(+). The protein operates within pyrimidine metabolism; UMP biosynthesis via de novo pathway; (S)-dihydroorotate from bicarbonate: step 2/3. In terms of biological role, catalyzes the condensation of carbamoyl phosphate and aspartate to form carbamoyl aspartate and inorganic phosphate, the committed step in the de novo pyrimidine nucleotide biosynthesis pathway. The protein is Aspartate carbamoyltransferase catalytic subunit of Bordetella bronchiseptica (strain ATCC BAA-588 / NCTC 13252 / RB50) (Alcaligenes bronchisepticus).